Consider the following 364-residue polypeptide: Natterin-3 (364 aa).

A signal peptide spans 1–18; sequence MKLSVLVVTLLAVSWTSA. Residues 19-42 constitute a propeptide that is removed on maturation; that stretch reads QPETFSIQTKEANMNPEPANIRVA.

It belongs to the natterin family. Post-translationally, contains 4 disulfide bonds. Expressed by the venom gland.

It is found in the secreted. Its activity is regulated as follows. Inhibited by tissue-kallikrein inhibitor TKI and trasylol. Plasma kallikrein inhibitor PKSI527 and classical inhibitors of serine-, metallo-, thiol- or aspartate-peptidases evokes a minor inhibition of the peptide digestion. Shows nociceptive, edema-inducing and kininogenase activity with release of kallidin from low molecular weight kininogen. The cleavage occurs at Met-Lys bonds. This is Natterin-3 from Thalassophryne nattereri (Copper Joe toadfish).